The primary structure comprises 41 residues: Large ribosomal subunit protein bL36 (41 aa).

This sequence belongs to the bacterial ribosomal protein bL36 family.

The sequence is that of Large ribosomal subunit protein bL36 from Mesorhizobium japonicum (strain LMG 29417 / CECT 9101 / MAFF 303099) (Mesorhizobium loti (strain MAFF 303099)).